The chain runs to 493 residues: Glutamyl-tRNA(Gln) amidotransferase subunit A (493 aa).

Active-site charge relay system residues include lysine 78 and serine 158. Serine 182 acts as the Acyl-ester intermediate in catalysis.

Belongs to the amidase family. GatA subfamily. Heterotrimer of A, B and C subunits.

It catalyses the reaction L-glutamyl-tRNA(Gln) + L-glutamine + ATP + H2O = L-glutaminyl-tRNA(Gln) + L-glutamate + ADP + phosphate + H(+). In terms of biological role, allows the formation of correctly charged Gln-tRNA(Gln) through the transamidation of misacylated Glu-tRNA(Gln) in organisms which lack glutaminyl-tRNA synthetase. The reaction takes place in the presence of glutamine and ATP through an activated gamma-phospho-Glu-tRNA(Gln). This chain is Glutamyl-tRNA(Gln) amidotransferase subunit A, found in Rickettsia felis (strain ATCC VR-1525 / URRWXCal2) (Rickettsia azadi).